A 264-amino-acid chain; its full sequence is MSEEMVYFSGLSDALRITFVQMMILSAIAIVIFLYGMIITLQKWGSGATGYALEPQEGKRGSAITFLKTWWKQVTEKSPHGHGKPILEILILDILFQRRILKRSGLRWVMHILIFAGWMTLFALSGLMFSVELTHMIGIELPFTPHMFREWLSIPNYIFGYILLIGVLIAIVRRLFVSEVREASIMYDWVLIGVVFLVTISGFLADGIRTGLIWDFGLDPSLAPPAALFHSVISLLFCIAFIPYSKYIHIIAIPLALLANKGGE.

Helical transmembrane passes span 19–39 (FVQMMILSAIAIVIFLYGMII), 109–129 (VMHILIFAGWMTLFALSGLMF), 152–172 (LSIPNYIFGYILLIGVLIAIV), 185–205 (IMYDWVLIGVVFLVTISGFLA), and 222–242 (LAPPAALFHSVISLLFCIAFI).

The protein belongs to the HdrE family. The dihydromethanophenazine:CoB--CoM heterodisulfide reductase is composed of two subunits; HdrD and HdrE. Requires heme b as cofactor.

The protein localises to the cell membrane. It carries out the reaction methanophenazine + coenzyme B + coenzyme M = dihydromethanophenazine + coenzyme M-coenzyme B heterodisulfide. It participates in cofactor metabolism; coenzyme M-coenzyme B heterodisulfide reduction; coenzyme B and coenzyme M from coenzyme M-coenzyme B heterodisulfide: step 1/1. Functionally, part of a complex that catalyzes the reversible reduction of CoM-S-S-CoB to the thiol-coenzymes H-S-CoM (coenzyme M) and H-S-CoB (coenzyme B). HdrE may be responsible for anchoring the complex to the membrane. Electrons probably transfer from phenazine to the high potential 4Fe cluster in HdrD subunit, then to the low potential heme in HdrE subunit and finally to CoM-S-S-CoB. The polypeptide is Dihydromethanophenazine:CoB--CoM heterodisulfide reductase subunit E (hdrE) (Methanosarcina thermophila (strain ATCC 43570 / DSM 1825 / OCM 12 / VKM B-1830 / TM-1)).